The primary structure comprises 415 residues: Phosphoglycerate kinase (415 aa).

Substrate-binding positions include 27–29 (DIN), R44, 67–70 (HQGR), R124, and R164. ATP-binding positions include E336 and 362–365 (GGHM).

It belongs to the phosphoglycerate kinase family. Monomer.

It localises to the cytoplasm. The enzyme catalyses (2R)-3-phosphoglycerate + ATP = (2R)-3-phospho-glyceroyl phosphate + ADP. Its pathway is carbohydrate degradation; glycolysis; pyruvate from D-glyceraldehyde 3-phosphate: step 2/5. In Sulfurisphaera tokodaii (strain DSM 16993 / JCM 10545 / NBRC 100140 / 7) (Sulfolobus tokodaii), this protein is Phosphoglycerate kinase.